We begin with the raw amino-acid sequence, 614 residues long: Baeyer-Villiger monooxygenase peniC (614 aa).

FAD-binding positions include glutamate 99, threonine 107–tryptophan 110, aspartate 119, and tyrosine 125. NADP(+) contacts are provided by residues threonine 255–glutamine 261, arginine 278–threonine 279, and lysine 398–arginine 399.

This sequence belongs to the FAD-binding monooxygenase family. FAD is required as a cofactor.

The catalysed reaction is gamma-lactone-2-keto[5.5.5.5]fenestrane + NADPH + O2 + H(+) = penifulvin A + NADP(+) + H2O. It participates in secondary metabolite biosynthesis; terpenoid biosynthesis. Functionally, baeyer-Villiger monooxygenase; part of the gene cluster that mediates the biosynthesis of penifulvin A, a potent insecticidal sesquiterpene that features a [5.5.5.6]dioxafenestrane ring. Within the pathway, peniC is responsible for the final regioselective Baeyer-Villiger oxidation of gamma-lactone-2-keto[5.5.5.5]fenestran between C1 and C2 to form the delta-lactone moiety of penifulvin A. The first step of the pathway is performed by the sesquiterpene cyclase peniA that generates the angular triquinane scaffold silphinene via cyclization of the linear farnesyl pyrophosphate (FPP). The cytochrome P450 monooxygenase peniB and the flavin-dependent monooxygenase peniC then catalyze a series of oxidation reactions to transform silphinene into penifulvin A. This Penicillium patulum (Penicillium griseofulvum) protein is Baeyer-Villiger monooxygenase peniC.